Consider the following 857-residue polypeptide: MSGRDNRGAGGGGGGHQPLSNAMGKLKEKLTRVGDELGYHRVESNLSTSNTATSLDTILPEDPFLFPQVSPQRHPQNTVRTQRLLEDEPPLSFRPLLEDDDINEPPTQQQQRTPLRASGSLELTPLPPPPTSLEIREHRDRQQRGAQGDELQRSKQSLKGSRVSFERRDTGNSNTNSNKAAESSDEDSFEEKRTGFQQQKATSVDHKGILKDLKHILANDNRRQFQAKKHVSLDVKGTRFLQDLLKESSSEEEFHKTRREFQGRKHQSLDPRVTFKLDKVLQGSSTDSDEEGEDAEHKRLIHRPKDITKPVIIDLKDLESESDEDFLTSRQHFQQQRSISTDSRKSRRLYEMDEMDNKRGENIRHAVPFVRQITEDGKPKLEVYRPTTNPIYIWTQVLAALSVSLGSLVVGFVSAYTSPALVSMTDRNITSFEVTQDAGSWVGGIMPLAGLAGGIAGGPLIEYLGRRNTILATAVPFIVSSLLIACAVNVAMVLCGRFLAGFCVGIASLSLPVYLGETVQPEVRGTLGLLPTAFGNIGILLCFVAGSFMNWSMLAFLGAALPVPFLILMFLIPETPRWFVGRGLEERARKALKWLRGKEADVEPELKGLMRSQADADRQASRNTMLELLKLNNLKPLSISLGLMFFQQFSGINAVIFYTVQIFKDAGSTIDGNLCTIIVGIVNFLATFIGIVLIDRAGRKILLYVSDIAMVLTLFVLGGFFYCKTYGPDVSHLGWLPLTCFVIYILGFSLGFGPIPWLMMGEILPAKIRGSAASVATAFNWFCTFVVTKTFQDLTVAMGAHGAFWLFGAICFVGLFFVIIYVPETQGKTLEDIERKMMGRVRRMSSVANIKPLSFNM.

2 disordered regions span residues 1 to 28 (MSGR…KLKE) and 62 to 202 (DPFL…QKAT). The Cytoplasmic portion of the chain corresponds to 1 to 392 (MSGRDNRGAG…VYRPTTNPIY (392 aa)). The residue at position 9 (A9) is a Phosphothreonine. G12 is subject to Phosphoserine. The segment covering 69–81 (VSPQRHPQNTVRT) has biased composition (polar residues). Basic and acidic residues predominate over residues 134 to 143 (EIREHRDRQQ). Polar residues predominate over residues 171 to 181 (GNSNTNSNKAA). Phosphoserine is present on residues S248, S249, and S250. Disordered regions lie at residues 249–269 (SSEE…HQSL) and 280–299 (VLQG…EHKR). S320 and S322 each carry phosphoserine. The tract at residues 327–346 (LTSRQHFQQQRSISTDSRKS) is disordered. Polar residues predominate over residues 330-341 (RQHFQQQRSIST). Residues 393-413 (IWTQVLAALSVSLGSLVVGFV) form a helical membrane-spanning segment. Residues 414–440 (SAYTSPALVSMTDRNITSFEVTQDAGS) are Extracellular-facing. N-linked (GlcNAc...) asparagine glycosylation occurs at N428. Residues 441–461 (WVGGIMPLAGLAGGIAGGPLI) form a helical membrane-spanning segment. Residues 462–473 (EYLGRRNTILAT) are Cytoplasmic-facing. Residues 474–494 (AVPFIVSSLLIACAVNVAMVL) traverse the membrane as a helical segment. At 495 to 497 (CGR) the chain is on the extracellular side. The helical transmembrane segment at 498 to 518 (FLAGFCVGIASLSLPVYLGET) threads the bilayer. At 519 to 528 (VQPEVRGTLG) the chain is on the cytoplasmic side. A helical membrane pass occupies residues 529-549 (LLPTAFGNIGILLCFVAGSFM). Residue N550 is glycosylated (N-linked (GlcNAc...) asparagine). The Extracellular segment spans residues 550 to 552 (NWS). Residues 553-573 (MLAFLGAALPVPFLILMFLIP) form a helical membrane-spanning segment. Residues 574-636 (ETPRWFVGRG…ELLKLNNLKP (63 aa)) lie on the Cytoplasmic side of the membrane. The helical transmembrane segment at 637–657 (LSISLGLMFFQQFSGINAVIF) threads the bilayer. At 658-673 (YTVQIFKDAGSTIDGN) the chain is on the extracellular side. A helical membrane pass occupies residues 674-694 (LCTIIVGIVNFLATFIGIVLI). Residues 695–700 (DRAGRK) lie on the Cytoplasmic side of the membrane. The helical transmembrane segment at 701-721 (ILLYVSDIAMVLTLFVLGGFF) threads the bilayer. At 722 to 740 (YCKTYGPDVSHLGWLPLTC) the chain is on the extracellular side. Residues 741–761 (FVIYILGFSLGFGPIPWLMMG) form a helical membrane-spanning segment. Residues 762–767 (EILPAK) are Cytoplasmic-facing. A helical membrane pass occupies residues 768–788 (IRGSAASVATAFNWFCTFVVT). At 789–801 (KTFQDLTVAMGAH) the chain is on the extracellular side. A helical transmembrane segment spans residues 802 to 822 (GAFWLFGAICFVGLFFVIIYV). Topologically, residues 823-857 (PETQGKTLEDIERKMMGRVRRMSSVANIKPLSFNM) are cytoplasmic. Residues S845 and S846 each carry the phosphoserine modification.

The protein belongs to the major facilitator superfamily. Sugar transporter (TC 2.A.1.1) family. Trehalose transporter subfamily. As to expression, expressed in perineurial glia of the outer layer of the nervous system that forms the blood brain barrier (at protein level). Expressed in the fat body (at protein level). May be specifically expressed in perineurial glia (at protein level). In terms of tissue distribution, may be specifically expressed in the fat body (at protein level).

It localises to the cell membrane. It is found in the vesicle. The catalysed reaction is alpha,alpha-trehalose(in) = alpha,alpha-trehalose(out). The enzyme catalyses D-glucose(out) = D-glucose(in). Functionally, low-capacity facilitative transporter for trehalose. Can also transport glucose. Does not transport maltose, sucrose, lactose or fructose. Mediates the bidirectional transfer of trehalose. Responsible for the transport of trehalose synthesized in the fat body and the incorporation of trehalose into other tissues that require a carbon source, thereby regulating trehalose levels in the hemolymph. Required in glial cells of the blood brain barrier to fuel glycolysis but not required in neurons. Neurons rely on the citric acid cycle for their energy needs and utilise alanine and lactate, by-products of glial cell glycolysis released into the hemolymph, as fuel. Increased expression in glial cells of the blood brain barrier during starvation and increased cell surface localization enhances carbohydrate uptake to protect the central nervous system from restricted nutrient availability. The protein is Trehalose transporter 1 of Drosophila melanogaster (Fruit fly).